A 212-amino-acid polypeptide reads, in one-letter code: Hemagglutinin 2 (212 aa).

Its subcellular location is the secreted. Induces agglutination of neuraminidase-treated erythrocytes. In Eikenella corrodens, this protein is Hemagglutinin 2 (hag2).